Reading from the N-terminus, the 238-residue chain is 2,3,4,5-tetrahydropyridine-2,6-dicarboxylate N-acetyltransferase (238 aa).

Belongs to the transferase hexapeptide repeat family. DapH subfamily.

The enzyme catalyses (S)-2,3,4,5-tetrahydrodipicolinate + acetyl-CoA + H2O = L-2-acetamido-6-oxoheptanedioate + CoA. The protein operates within amino-acid biosynthesis; L-lysine biosynthesis via DAP pathway; LL-2,6-diaminopimelate from (S)-tetrahydrodipicolinate (acetylase route): step 1/3. Catalyzes the transfer of an acetyl group from acetyl-CoA to tetrahydrodipicolinate. The polypeptide is 2,3,4,5-tetrahydropyridine-2,6-dicarboxylate N-acetyltransferase (Thermotoga neapolitana (strain ATCC 49049 / DSM 4359 / NBRC 107923 / NS-E)).